The sequence spans 622 residues: 3-(3-hydroxy-phenyl)propionate/3-hydroxycinnamic acid hydroxylase (622 aa).

Residues Asp-20–Lys-49 and Phe-288–Asp-298 each bind FAD.

Belongs to the PheA/TfdB FAD monooxygenase family. Requires FAD as cofactor.

The enzyme catalyses 3-(3-hydroxyphenyl)propanoate + NADH + O2 + H(+) = 3-(2,3-dihydroxyphenyl)propanoate + NAD(+) + H2O. It carries out the reaction (2E)-3-(3-hydroxyphenyl)prop-2-enoate + NADH + O2 + H(+) = (2E)-3-(2,3-dihydroxyphenyl)prop-2-enoate + NAD(+) + H2O. It functions in the pathway aromatic compound metabolism; 3-phenylpropanoate degradation. In terms of biological role, catalyzes the insertion of one atom of molecular oxygen into position 2 of the phenyl ring of 3-(3-hydroxyphenyl)propionate (3-HPP) and hydroxycinnamic acid (3HCI). The polypeptide is 3-(3-hydroxy-phenyl)propionate/3-hydroxycinnamic acid hydroxylase (Paraburkholderia xenovorans (strain LB400)).